A 397-amino-acid polypeptide reads, in one-letter code: Phosphopentomutase (397 aa).

Mn(2+) is bound by residues Asp12, Asp289, His294, Asp330, His331, and His342.

The protein belongs to the phosphopentomutase family. Mn(2+) serves as cofactor.

It is found in the cytoplasm. The catalysed reaction is 2-deoxy-alpha-D-ribose 1-phosphate = 2-deoxy-D-ribose 5-phosphate. It carries out the reaction alpha-D-ribose 1-phosphate = D-ribose 5-phosphate. Its pathway is carbohydrate degradation; 2-deoxy-D-ribose 1-phosphate degradation; D-glyceraldehyde 3-phosphate and acetaldehyde from 2-deoxy-alpha-D-ribose 1-phosphate: step 1/2. In terms of biological role, isomerase that catalyzes the conversion of deoxy-ribose 1-phosphate (dRib-1-P) and ribose 1-phosphate (Rib-1-P) to deoxy-ribose 5-phosphate (dRib-5-P) and ribose 5-phosphate (Rib-5-P), respectively. The protein is Phosphopentomutase of Limosilactobacillus reuteri (strain DSM 20016) (Lactobacillus reuteri).